Reading from the N-terminus, the 610-residue chain is MNQVRRWQRILILSLLLLSVLAPIVFVSNRLKSITSVDRGEFIEELSDITDKTEDELRLTAIEQDEEGLKEPKRILQDRDFNSVVLSNSSDKSNDTVQSNEGDQKNFLSEVDKGNNHKPKEEQAVSQKTTVSSNAEVKISARDIQLNHKTEFRPPSSKSEKNTRVQLERATDERVKEIRDKIIQAKAYLNLALPGNNSQIVKELRVRTKELERATGDTTKDKYLPKSSPNRLKAMEVALYKVSRAFHNCPAIATKLQAMTYKTEEQARAQKKQAAYLMQLAARTTPKGLHCLSMRLTTEYFTLDHEKRQLLQQSYNDPDLYHYVVFSDNVLASSVVVNSTISSSKEPDKIVFHVVTDSLNYPAISMWFLLNPSGRASIQILNIDEMNVLPLYHAELLMKQNSSDPRIISALNHARFYLPDIFPGLNKIVLFDHDVVVQRDLTRLWSLDMTGKVVGAVETCLEGDPSYRSMDSFINFSDAWVSQKFDPKACTWAFGMNLFDLEEWRRQELTSVYLKYFDLGVKGHLWKAGGLPVGWLTFFGQTFPLEKRWNVGGLGHESGLRASDIEQAAVIHYDGIMKPWLDIGIDKYKRYWNIHVPYHHPHLQRCNIHD.

At 1–6 the chain is on the cytoplasmic side; the sequence is MNQVRR. Residues 7-27 form a helical; Signal-anchor for type II membrane protein membrane-spanning segment; sequence WQRILILSLLLLSVLAPIVFV. At 28-610 the chain is on the lumenal side; the sequence is SNRLKSITSV…PHLQRCNIHD (583 aa). Positions 86–101 are enriched in polar residues; sequence LSNSSDKSNDTVQSNE. Positions 86 to 170 are disordered; it reads LSNSSDKSND…KNTRVQLERA (85 aa). N-linked (GlcNAc...) asparagine glycans are attached at residues asparagine 88 and asparagine 94. The segment covering 110 to 123 has biased composition (basic and acidic residues); the sequence is EVDKGNNHKPKEEQ. The segment covering 124–135 has biased composition (polar residues); it reads AVSQKTTVSSNA. Residues 139 to 170 are compositionally biased toward basic and acidic residues; it reads ISARDIQLNHKTEFRPPSSKSEKNTRVQLERA. N-linked (GlcNAc...) asparagine glycans are attached at residues asparagine 196, asparagine 338, asparagine 401, and asparagine 475.

Belongs to the glycosyltransferase 8 family. Expressed in roots, inflorescences, siliques, leaves and stems.

It is found in the golgi apparatus membrane. Its pathway is glycan metabolism; pectin biosynthesis. Its function is as follows. May be involved in pectin and/or xylans biosynthesis in cell walls. This Arabidopsis thaliana (Mouse-ear cress) protein is Probable galacturonosyltransferase 5 (GAUT5).